A 226-amino-acid chain; its full sequence is Isoprenyl transferase (226 aa).

D12 is an active-site residue. Position 12 (D12) interacts with Mg(2+). Residues 13 to 16 (GNAR), W17, K25, H29, and 57 to 59 (SSE) contribute to the substrate site. The active-site Proton acceptor is the N60. Substrate is bound by residues W61, R63, R174, and 180 to 182 (RIS). Residue E193 participates in Mg(2+) binding.

Belongs to the UPP synthase family. As to quaternary structure, homodimer. The cofactor is Mg(2+).

Catalyzes the condensation of isopentenyl diphosphate (IPP) with allylic pyrophosphates generating different type of terpenoids. In Rickettsia typhi (strain ATCC VR-144 / Wilmington), this protein is Isoprenyl transferase.